Here is a 181-residue protein sequence, read N- to C-terminus: Iron sulfur cluster assembly protein 1, mitochondrial (181 aa).

The disordered stretch occupies residues 159 to 181 (RKTKNPTLGAEAAETPAAATATA). The span at 168–181 (AEAAETPAAATATA) shows a compositional bias: low complexity.

The protein belongs to the NifU family. As to quaternary structure, component of the core Fe-S cluster (ISC) assembly machinery. Requires [2Fe-2S] cluster as cofactor.

It is found in the mitochondrion matrix. It participates in cofactor biosynthesis; iron-sulfur cluster biosynthesis. Its function is as follows. Scaffold protein for the de novo synthesis of iron-sulfur (Fe-S) clusters within mitochondria, which is required for maturation of both mitochondrial and cytoplasmic [2Fe-2S] and [4Fe-4S] proteins. First, a [2Fe-2S] cluster is transiently assembled on the scaffold protein ISU1. In a second step, the cluster is released from ISU1, transferred to a glutaredoxin, followed by the formation of mitochondrial [2Fe-2S] proteins, the synthesis of [4Fe-4S] clusters and their target-specific insertion into the recipient apoproteins. Cluster assembly on ISU1 depends on the function of the cysteine desulfurase complex NFS1-ISD11, which serves as the sulfur donor for cluster synthesis, the iron-binding protein frataxin as the putative iron donor, and the electron transfer chain comprised of ferredoxin reductase and ferredoxin, which receive their electrons from NADH. The protein is Iron sulfur cluster assembly protein 1, mitochondrial (ISU1) of Yarrowia lipolytica (strain CLIB 122 / E 150) (Yeast).